The primary structure comprises 105 residues: Large ribosomal subunit protein P1 (105 aa).

A Blocked amino end (Met) modification is found at M1. Residues V65–A76 are compositionally biased toward low complexity. The segment at V65 to G105 is disordered. Basic and acidic residues predominate over residues A77–S92.

It belongs to the eukaryotic ribosomal protein P1/P2 family. As to quaternary structure, part of the 50S ribosomal subunit. Homodimer, it forms part of the ribosomal stalk which helps the ribosome interact with GTP-bound translation factors. Forms a heptameric uL10/P0(P1)2(P1)2(P1)2 complex, where uL10/P0 forms an elongated spine to which the P1 dimers bind in a sequential fashion.

Its function is as follows. Forms part of the ribosomal stalk, playing a central role in the interaction of the ribosome with GTP-bound translation factors. The sequence is that of Large ribosomal subunit protein P1 from Sulfolobus acidocaldarius (strain ATCC 33909 / DSM 639 / JCM 8929 / NBRC 15157 / NCIMB 11770).